Reading from the N-terminus, the 381-residue chain is Pulmonary surfactant-associated protein B (381 aa).

The N-terminal stretch at 1 to 24 is a signal peptide; it reads MAESHLLQWLLLLLPTLCGPGTAA. The region spanning 25-65 is the Saposin A-type domain; that stretch reads WTTSSLACAQGPEFWCQSLEQALQCRALGHCLQEVWGHVGA. Positions 25–200 are excised as a propeptide; that stretch reads WTTSSLACAQ…PHTQDLSEQQ (176 aa). Saposin B-type domains lie at 65 to 147, 204 to 281, and 295 to 370; these read ADDL…KSRQ, PLPY…SMDD, and RDSE…GTMS. 9 disulfides stabilise this stretch: C69–C143, C72–C137, C100–C112, C208–C277, C211–C271, C235–C246, C299–C366, C302–C360, and C325–C335. N-linked (GlcNAc...) asparagine glycosylation is present at N129. The propeptide occupies 280–381; sequence DDSAGPRSPT…PLQCIHSPDL (102 aa). An N-linked (GlcNAc...) asparagine glycan is attached at N311.

Homodimer; disulfide-linked.

It is found in the secreted. The protein resides in the extracellular space. The protein localises to the surface film. In terms of biological role, pulmonary surfactant-associated proteins promote alveolar stability by lowering the surface tension at the air-liquid interface in the peripheral air spaces. SP-B increases the collapse pressure of palmitic acid to nearly 70 millinewtons per meter. The polypeptide is Pulmonary surfactant-associated protein B (SFTPB) (Homo sapiens (Human)).